A 565-amino-acid chain; its full sequence is Wee1-like protein kinase 2 (565 aa).

The region spanning 217-493 (FLELERIGVG…TKHPILRPSL (277 aa)) is the Protein kinase domain. ATP is bound by residues 223–231 (IGVGEFGSV) and Lys-246. Asp-344 serves as the catalytic Proton acceptor. 2 residues coordinate Mg(2+): Asn-349 and Asp-383. Residues 496-522 (AVQLQKQLNVEKCKTAMLERELKAARL) adopt a coiled-coil conformation. Positions 531–553 (PLGNANLQESETSPKKNNKRLVG) are disordered.

This sequence belongs to the protein kinase superfamily. Ser/Thr protein kinase family. WEE1 subfamily.

Its subcellular location is the nucleus. The enzyme catalyses L-tyrosyl-[protein] + ATP = O-phospho-L-tyrosyl-[protein] + ADP + H(+). In terms of biological role, oocyte-specific protein tyrosine kinase that phosphorylates and inhibits CDK1 and acts as a key regulator of meiosis. Required to maintain meiotic arrest in oocytes by phosphorylating CDK1 at 'Tyr-15', leading to inhibit CDK1 activity and prevent meiotic reentry. This Gallus gallus (Chicken) protein is Wee1-like protein kinase 2 (WEE2).